Consider the following 144-residue polypeptide: Bacilliredoxin BLi02323/BL05224 (144 aa).

Belongs to the bacilliredoxin family.

This Bacillus licheniformis (strain ATCC 14580 / DSM 13 / JCM 2505 / CCUG 7422 / NBRC 12200 / NCIMB 9375 / NCTC 10341 / NRRL NRS-1264 / Gibson 46) protein is Bacilliredoxin BLi02323/BL05224.